The chain runs to 389 residues: GTPase Obg (389 aa).

An Obg domain is found at 1–159; it reads MKFVDEAVIK…RELRLELLLL (159 aa). The OBG-type G domain occupies 160–333; sequence ADVGLLGMPN…LAEKLFDFIK (174 aa). GTP contacts are provided by residues 166-173, 191-195, 213-216, 283-286, and 314-316; these read GMPNAGKS, FTTLV, DIPG, NKTD, and SAA. The Mg(2+) site is built by Ser-173 and Thr-193.

The protein belongs to the TRAFAC class OBG-HflX-like GTPase superfamily. OBG GTPase family. As to quaternary structure, monomer. Mg(2+) serves as cofactor.

The protein resides in the cytoplasm. An essential GTPase which binds GTP, GDP and possibly (p)ppGpp with moderate affinity, with high nucleotide exchange rates and a fairly low GTP hydrolysis rate. Plays a role in control of the cell cycle, stress response, ribosome biogenesis and in those bacteria that undergo differentiation, in morphogenesis control. The polypeptide is GTPase Obg (Shewanella amazonensis (strain ATCC BAA-1098 / SB2B)).